Reading from the N-terminus, the 493-residue chain is Probable cytosol aminopeptidase (493 aa).

Mn(2+) is bound by residues Lys-259 and Asp-264. Lys-271 is an active-site residue. Mn(2+) contacts are provided by Asp-282, Asp-341, and Glu-343. Residue Arg-345 is part of the active site.

It belongs to the peptidase M17 family. The cofactor is Mn(2+).

It localises to the cytoplasm. It carries out the reaction Release of an N-terminal amino acid, Xaa-|-Yaa-, in which Xaa is preferably Leu, but may be other amino acids including Pro although not Arg or Lys, and Yaa may be Pro. Amino acid amides and methyl esters are also readily hydrolyzed, but rates on arylamides are exceedingly low.. It catalyses the reaction Release of an N-terminal amino acid, preferentially leucine, but not glutamic or aspartic acids.. In terms of biological role, presumably involved in the processing and regular turnover of intracellular proteins. Catalyzes the removal of unsubstituted N-terminal amino acids from various peptides. The sequence is that of Probable cytosol aminopeptidase from Bacillus cytotoxicus (strain DSM 22905 / CIP 110041 / 391-98 / NVH 391-98).